The following is a 309-amino-acid chain: MAGFTLLPSRLLAFPSRALPRRLHHHHAKLILRCKMSSSSSSLTQSITLPSQPNEPVLVSATAGISSSDFRDAIDSSLFRNWLRNLESESGILADGSMTLKQVLIQGVDMFGKRIGFLKFKADIFDKETGQKVPGIVFARGPAVAVLILLESDGETYAVLTEQVRVPTGKIVLELPAGMLDDDKGDFVGTAVREVEEEIGIKLKKEDMVDLTAFLDPSTGYRIFPSPGGCDEEMSVFLYRGQVEKETIRQLQGKETGLREHGEFIKVRLIPYRELWRKTADAKVLMSIGLYEMAQREGLVSSQRLKPNS.

The N-terminal 60 residues, 1–60 (MAGFTLLPSRLLAFPSRALPRRLHHHHAKLILRCKMSSSSSSLTQSITLPSQPNEPVLVS), are a transit peptide targeting the chloroplast. Positions 139–292 (ARGPAVAVLI…KVLMSIGLYE (154 aa)) constitute a Nudix hydrolase domain. The short motif at 179–200 (MLDDDKGDFVGTAVREVEEEIG) is the Nudix box element. 2 residues coordinate Mg(2+): E194 and E198.

The protein belongs to the Nudix hydrolase family. As to quaternary structure, homodimer. Requires Mg(2+) as cofactor. Mn(2+) serves as cofactor. As to expression, expressed in roots, leaves, stems and inflorescences.

The protein localises to the plastid. The protein resides in the chloroplast. It catalyses the reaction ADP-sugar + H2O = AMP + alpha-D-aldose 1-phosphate.. In terms of biological role, mediates the hydrolysis of some nucleoside diphosphate derivatives. Can use ADP-glucose, ADP-mannose and ADP-ribose as substrates. Regulates the intracellular ADP-glucose levels linked to starch biosynthesis. In Arabidopsis thaliana (Mouse-ear cress), this protein is Nudix hydrolase 14, chloroplastic (NUDT14).